The chain runs to 968 residues: Sorting nexin-13 (968 aa).

Residues Ala97 to Asn284 enclose the PXA domain. Residues Pro373 to Asp496 form the RGS domain. The 122-residue stretch at Tyr570–Lys691 folds into the PX domain. Residues Arg612, Ser614, Lys639, and Arg653 each contribute to the a 1,2-diacyl-sn-glycero-3-phospho-(1D-myo-inositol-3-phosphate) site.

This sequence belongs to the sorting nexin family.

The protein resides in the early endosome membrane. Its function is as follows. May be involved in several stages of intracellular trafficking. May play a role in endosome homeostasis. Acts as a GAP for Galphas. The sequence is that of Sorting nexin-13 (SNX13) from Homo sapiens (Human).